The following is a 257-amino-acid chain: Zinc transporter ZupT (257 aa).

3 helical membrane passes run 5–25 (LILT…GVLG), 32–52 (LLAF…LMEM), and 61–81 (GMSP…YFGL). Fe(2+) contacts are provided by N120 and E123. Zn(2+) is bound by residues E123 and H148. 4 consecutive transmembrane segments (helical) span residues 137 to 157 (LGFG…LAVA), 171 to 191 (ILWA…AWLI), 195 to 215 (MISP…MVAL), and 236 to 256 (GVLC…TAGI). Fe(2+)-binding residues include N149, E152, and E181. Residue E152 participates in Zn(2+) binding.

Belongs to the ZIP transporter (TC 2.A.5) family. ZupT subfamily.

The protein resides in the cell inner membrane. The catalysed reaction is Zn(2+)(in) = Zn(2+)(out). In terms of biological role, mediates zinc uptake. May also transport other divalent cations. The polypeptide is Zinc transporter ZupT (Escherichia coli O45:K1 (strain S88 / ExPEC)).